We begin with the raw amino-acid sequence, 333 residues long: Nucleoid-associated protein PSPPH_1145 (333 aa).

Belongs to the YejK family.

Its subcellular location is the cytoplasm. It is found in the nucleoid. In Pseudomonas savastanoi pv. phaseolicola (strain 1448A / Race 6) (Pseudomonas syringae pv. phaseolicola (strain 1448A / Race 6)), this protein is Nucleoid-associated protein PSPPH_1145.